The following is a 539-amino-acid chain: Glucose-6-phosphate isomerase (539 aa).

The Proton donor role is filled by E340. Catalysis depends on residues H371 and K500.

This sequence belongs to the GPI family.

The protein localises to the cytoplasm. The enzyme catalyses alpha-D-glucose 6-phosphate = beta-D-fructose 6-phosphate. The protein operates within carbohydrate biosynthesis; gluconeogenesis. It participates in carbohydrate degradation; glycolysis; D-glyceraldehyde 3-phosphate and glycerone phosphate from D-glucose: step 2/4. Its function is as follows. Catalyzes the reversible isomerization of glucose-6-phosphate to fructose-6-phosphate. This Ruegeria pomeroyi (strain ATCC 700808 / DSM 15171 / DSS-3) (Silicibacter pomeroyi) protein is Glucose-6-phosphate isomerase.